Reading from the N-terminus, the 83-residue chain is uncharacterized protein (83 aa).

A disordered region spans residues 15-36; the sequence is RLKNGRGNKTMSESDYNTSDSG. Residues 21–35 are compositionally biased toward polar residues; the sequence is GNKTMSESDYNTSDS.

This is an uncharacterized protein from Aedes vexans (Inland floodwater mosquito).